The following is an 884-amino-acid chain: Probable leucine-rich repeat receptor-like protein kinase At2g28990 (884 aa).

Residues 1–19 (MKIHLLLAMIGTFVVIIGA) form the signal peptide. Residues 20 to 508 (QDQEGFISLD…TEKKNKFLLP (489 aa)) lie on the Extracellular side of the membrane. Asn-70, Asn-177, Asn-217, Asn-231, Asn-251, Asn-284, Asn-298, Asn-334, Asn-418, Asn-427, Asn-438, Asn-459, and Asn-464 each carry an N-linked (GlcNAc...) asparagine glycan. LRR repeat units lie at residues 404-427 (SPTI…ILQN), 428-451 (FTQL…FLAN), and 452-476 (MKTL…LLDK). A helical transmembrane segment spans residues 509-529 (VIASAASLVIVVVVVALFFVF). At 530 to 884 (RKKKASPSNL…IYNEVIPQAR (355 aa)) the chain is on the cytoplasmic side. A disordered region spans residues 535-559 (SPSNLHAPPSMPVSNPGHNSQSESS). Over residues 546-559 (PVSNPGHNSQSESS) the composition is skewed to polar residues. At Thr-568 the chain carries Phosphothreonine. The Protein kinase domain maps to 577-850 (NNFDKALGEG…RVVNELKECL (274 aa)). Residues 583–591 (LGEGGFGVV) and Lys-605 each bind ATP. At Tyr-650 the chain carries Phosphotyrosine. The Proton acceptor role is filled by Asp-702. Ser-736 is modified (phosphoserine). Phosphothreonine occurs at positions 737 and 742. Tyr-750 is modified (phosphotyrosine).

This sequence belongs to the protein kinase superfamily. Ser/Thr protein kinase family. In terms of assembly, binds to the ammonium transporter AMT1-1.

The protein localises to the membrane. The enzyme catalyses L-seryl-[protein] + ATP = O-phospho-L-seryl-[protein] + ADP + H(+). The catalysed reaction is L-threonyl-[protein] + ATP = O-phospho-L-threonyl-[protein] + ADP + H(+). The polypeptide is Probable leucine-rich repeat receptor-like protein kinase At2g28990 (Arabidopsis thaliana (Mouse-ear cress)).